A 3101-amino-acid chain; its full sequence is Probable polyketide synthase 32 (3101 aa).

Residues 27–465 form the Ketosynthase family 3 (KS3) domain; it reads SGDVAVIGIG…GSNVCLILSE (439 aa). Residues Cys-199, His-338, and His-388 each act as for beta-ketoacyl synthase activity in the active site. The acyl/malonyl transferase stretch occupies residues 664 to 697; sequence GVSADIIIGHSLGEVSSAYCSGMIDFETLCYLTY. The For acyl/malonyl transferase activity role is filled by Ser-674. The segment at 965 to 1087 is N-terminal hotdog fold; the sequence is GPSINNLGNN…GNFSLTKHNS (123 aa). The PKS/mFAS DH domain occupies 965 to 1287; that stretch reads GPSINNLGNN…CTLVSLPNPE (323 aa). His-999 acts as the Proton acceptor; for dehydratase activity in catalysis. The interval 1104-1287 is C-terminal hotdog fold; sequence NFTSISKQDL…CTLVSLPNPE (184 aa). Asp-1176 functions as the Proton donor; for dehydratase activity in the catalytic mechanism. Residues 1209–1236 are disordered; sequence KNGNNNDDDEESNNNNNNNNNNNNNNNN. Over residues 1221–1236 the composition is skewed to low complexity; sequence NNNNNNNNNNNNNNNN. Residues 2550-2627 enclose the Carrier domain; that stretch reads DNNEIIRSTI…QSIEIIKSAN (78 aa). The residue at position 2587 (Ser-2587) is an O-(pantetheine 4'-phosphoryl)serine. The interval 2627–2648 is disordered; sequence NNKNNKNNNNNNNNKTNKNNNN.

The cofactor is pantetheine 4'-phosphate.

In terms of biological role, probable polyketide synthase. The sequence is that of Probable polyketide synthase 32 (pks32) from Dictyostelium discoideum (Social amoeba).